Reading from the N-terminus, the 428-residue chain is Proteinase-activated receptor 1 (428 aa).

Positions 1 to 21 (MGPQRLLLVAAGLSLCGPLLS) are cleaved as a signal peptide. A propeptide spans 22–41 (SRVPVRQPESEMTDATVNPR) (removed for receptor activation). The Extracellular portion of the chain corresponds to 42-105 (SFFLRNPGEN…SGYLTSPWLR (64 aa)). Residues Asn65 and Asn78 are each glycosylated (N-linked (GlcNAc...) asparagine). A helical membrane pass occupies residues 106–131 (LFIPSVYTFVFVVSLPLNILAIAVFV). At 132 to 140 (LKMKVKKPA) the chain is on the cytoplasmic side. Residues 141 to 160 (VVYMLHLAMADVLFVSVLPL) traverse the membrane as a helical segment. The Extracellular portion of the chain corresponds to 161 to 179 (KISYYFSGSDWQFGSGMCR). Residues Cys178 and Cys257 are joined by a disulfide bond. A helical membrane pass occupies residues 180-201 (FATAAFYCNMYASIMLMTVISI). Residues 202-221 (DRFLAVVYPIQSLSWRTLGR) lie on the Cytoplasmic side of the membrane. The chain crosses the membrane as a helical span at residues 222–242 (ANFTCLVIWVMAIMGVVPLLL). Residues 243-271 (KEQTTRVPGLNITTCHDVLNETLLQGFYS) lie on the Extracellular side of the membrane. Asn253 and Asn262 each carry an N-linked (GlcNAc...) asparagine glycan. Residues 272-291 (YYFSAFSAVFFLVPLIISTI) form a helical membrane-spanning segment. The Cytoplasmic segment spans residues 292-314 (CYMSIIRCLSSSSVANRSKKSRA). Residues 315-337 (LFLSAAVFCVFIVCFGPTNVLLI) form a helical membrane-spanning segment. Residues 338–352 (MHYLLLSDSPATEKA) lie on the Extracellular side of the membrane. A helical transmembrane segment spans residues 353-377 (YFAYLLCVCVSSVSCCIDPLIYYYA). Residues 378-428 (SSECQRHLYGILCCKESSDPNSYNSTGQLMPSKMDTCSSHLNNSIYKKLLA) lie on the Cytoplasmic side of the membrane. A Phosphoserine modification is found at Ser421.

The protein belongs to the G-protein coupled receptor 1 family. In terms of processing, proteolytic cleavage by thrombin generates a new N-terminus that functions as a tethered ligand. Also proteolytically cleaved by cathepsin CTSG. Post-translationally, phosphorylated in the C-terminal tail; probably mediating desensitization prior to the uncoupling and internalization of the receptor.

The protein localises to the cell membrane. Functionally, high affinity receptor that binds the activated thrombin, leading to calcium release from intracellular stores. The thrombin-activated receptor signaling pathway is mediated through PTX-insensitive G proteins, activation of phospholipase C resulting in the production of 1D-myo-inositol 1,4,5-trisphosphate (InsP3) which binds to InsP3 receptors causing calcium release from the stores. In astrocytes, the calcium released into the cytosol allows the Ca(2+)-dependent release of L-glutamate into the synaptic cleft through BEST1, that targets the neuronal postsynaptic GRIN2A/NMDAR receptor resulting in the synaptic plasticity regulation. May play a role in platelets activation and in vascular development. Mediates up-regulation of pro-inflammatory cytokines, such as MCP-1/CCL2 and IL6, triggered by coagulation factor Xa (F10) in cardiac fibroblasts and umbilical vein endothelial cells. This chain is Proteinase-activated receptor 1, found in Cricetulus longicaudatus (Long-tailed dwarf hamster).